The following is a 144-amino-acid chain: Maximins 3/H2 (144 aa).

The N-terminal stretch at 1-18 (MNFKYIVAVSFLIASAYA) is a signal peptide. 2 propeptides span residues 19–43 (RSVQNDEQSLSQRDVLEEESLREIR) and 74–123 (TAEE…KEKR). The residue at position 143 (I143) is an Isoleucine amide.

The protein belongs to the bombinin family. Expressed by the skin glands.

Its subcellular location is the secreted. Maximin-3 shows antibacterial activity against both Gram-positive and Gram-negative bacteria. It also shows antimicrobial activity against the fungus C.albicans, but not against A.flavus nor P.uticale. It has little hemolytic activity. It possess a significant cytotoxicity against tumor cell lines. It possess a significant anti-HIV activity. It shows high spermicidal activity. Its function is as follows. Maximin-H2 shows antibacterial activity against both Gram-positive and Gram-negative bacteria. It also shows antimicrobial activity against the fungus C.albicans. Shows strong hemolytic activity. This chain is Maximins 3/H2, found in Bombina maxima (Giant fire-bellied toad).